A 605-amino-acid chain; its full sequence is Pyruvate decarboxylase 1 (605 aa).

Substrate contacts are provided by D67 and H154. Positions 432-514 are thiamine pyrophosphate binding; sequence DSWFNCQKLR…FLINNGGYTI (83 aa). Mg(2+)-binding residues include D482, N509, and G511. E515 contributes to the substrate binding site.

It belongs to the TPP enzyme family. As to quaternary structure, homotetramer. A metal cation is required as a cofactor. Thiamine diphosphate serves as cofactor.

It catalyses the reaction a 2-oxocarboxylate + H(+) = an aldehyde + CO2. This is Pyruvate decarboxylase 1 (PDC1) from Oryza sativa subsp. japonica (Rice).